The sequence spans 311 residues: Giardin subunit alpha-8 (311 aa).

4 Annexin repeats span residues 5 to 73, 75 to 146, 154 to 223, and 227 to 295; these read RKAY…IRCW, NRHE…DRWM, NNVK…AAHY, and EPSK…SLWR.

Belongs to the annexin family. Giardin subunit alpha subfamily.

It localises to the cytoplasm. Its subcellular location is the cytoskeleton. Giardins are involved in parasite attachment to the intestinal mucosa and in the cytoskeletal disassembly and reassembly that marks the transition from infectious trophozoite to transmissible cyst. They may interact with other cytoskeletal proteins such as microtubules in the microribbons or crossbridges, to maintain the integrity of the ventral disk. This Giardia intestinalis (Giardia lamblia) protein is Giardin subunit alpha-8.